Reading from the N-terminus, the 237-residue chain is N-demethylindolmycin N-methyltransferase (237 aa).

This sequence belongs to the methyltransferase superfamily.

It catalyses the reaction N-demethylindolmycin + S-adenosyl-L-methionine = indolmycin + S-adenosyl-L-homocysteine + H(+). Functionally, involved in the biosynthesis of the antibiotic indolmycin, an inhibitor of the bacterial tryptophan-tRNA synthetases. Catalyzes the methylation of N-demethylindolmycin to yield indolmycin, with S-adenosylmethionine (AdoMet) acting as the methyl donor. In Streptomyces griseus, this protein is N-demethylindolmycin N-methyltransferase.